The chain runs to 509 residues: Sensor histidine kinase TrcS (509 aa).

2 consecutive transmembrane segments (helical) span residues 24–44 (LLLG…VVSV) and 188–208 (VALV…VVGY). One can recognise an HAMP domain in the interval 207-269 (GYALRPLRRV…LLDNVDGALA (63 aa)). Residues 284–502 (DASHELRTPL…VFRVRLPMIE (219 aa)) enclose the Histidine kinase domain. Residue His287 is modified to Phosphohistidine; by autocatalysis.

Requires a divalent metal cation as cofactor. Autophosphorylated.

It is found in the cell membrane. The catalysed reaction is ATP + protein L-histidine = ADP + protein N-phospho-L-histidine.. Member of the two-component regulatory system TrcS/TrcR. Phosphorylates TrcR. The TrcR-TrcS regulatory system may act as a transition regulatory system involved in adapting to an intracellular environment and transitioning from latency to reactivation. The protein is Sensor histidine kinase TrcS of Mycobacterium tuberculosis (strain ATCC 25618 / H37Rv).